Here is a 227-residue protein sequence, read N- to C-terminus: 2-C-methyl-D-erythritol 4-phosphate cytidylyltransferase (227 aa).

This sequence belongs to the IspD/TarI cytidylyltransferase family. IspD subfamily.

It carries out the reaction 2-C-methyl-D-erythritol 4-phosphate + CTP + H(+) = 4-CDP-2-C-methyl-D-erythritol + diphosphate. It functions in the pathway isoprenoid biosynthesis; isopentenyl diphosphate biosynthesis via DXP pathway; isopentenyl diphosphate from 1-deoxy-D-xylulose 5-phosphate: step 2/6. Its function is as follows. Catalyzes the formation of 4-diphosphocytidyl-2-C-methyl-D-erythritol from CTP and 2-C-methyl-D-erythritol 4-phosphate (MEP). This is 2-C-methyl-D-erythritol 4-phosphate cytidylyltransferase from Deinococcus geothermalis (strain DSM 11300 / CIP 105573 / AG-3a).